A 69-amino-acid polypeptide reads, in one-letter code: Neurotoxin Cex5 (69 aa).

Alanine 1 is a signal peptide. Residues 2–67 (KDGYLVSKST…TYPIPGKSCG (66 aa)) enclose the LCN-type CS-alpha/beta domain. Cystine bridges form between cysteine 13-cysteine 66, cysteine 17-cysteine 42, cysteine 26-cysteine 47, and cysteine 30-cysteine 49. A Cysteine amide modification is found at cysteine 66. A propeptide spanning residues 67–69 (GKK) is cleaved from the precursor.

Belongs to the long (4 C-C) scorpion toxin superfamily. Sodium channel inhibitor family. Beta subfamily. Expressed by the venom gland.

It is found in the secreted. In terms of biological role, beta toxins bind voltage-independently at site-4 of sodium channels (Nav) and shift the voltage of activation toward more negative potentials thereby affecting sodium channel activation and promoting spontaneous and repetitive firing. The polypeptide is Neurotoxin Cex5 (Centruroides exilicauda (Bark scorpion)).